The sequence spans 225 residues: Ribose-5-phosphate isomerase A (225 aa).

Substrate contacts are provided by residues threonine 26–threonine 29, aspartate 82–aspartate 85, and lysine 95–glycine 98. The active-site Proton acceptor is the glutamate 104. Lysine 122 contacts substrate.

This sequence belongs to the ribose 5-phosphate isomerase family. In terms of assembly, homodimer.

It catalyses the reaction aldehydo-D-ribose 5-phosphate = D-ribulose 5-phosphate. The protein operates within carbohydrate degradation; pentose phosphate pathway; D-ribose 5-phosphate from D-ribulose 5-phosphate (non-oxidative stage): step 1/1. Functionally, catalyzes the reversible conversion of ribose-5-phosphate to ribulose 5-phosphate. The polypeptide is Ribose-5-phosphate isomerase A (Streptococcus sanguinis (strain SK36)).